The primary structure comprises 206 residues: Transcriptional regulator GfcR (206 aa).

Belongs to the purine/pyrimidine phosphoribosyltransferase family. GfcR subfamily.

The protein is Transcriptional regulator GfcR of Methanosphaerula palustris (strain ATCC BAA-1556 / DSM 19958 / E1-9c).